Here is a 511-residue protein sequence, read N- to C-terminus: 2,3-bisphosphoglycerate-independent phosphoglycerate mutase (511 aa).

Residues Asp12 and Ser62 each coordinate Mn(2+). The active-site Phosphoserine intermediate is the Ser62. Substrate is bound by residues His123, 154-155, Arg181, Arg187, 252-255, and Lys335; these read RD and RPDR. Mn(2+) is bound by residues Asp402, His406, Asp444, His445, and His462.

The protein belongs to the BPG-independent phosphoglycerate mutase family. As to quaternary structure, monomer. Requires Mn(2+) as cofactor.

The enzyme catalyses (2R)-2-phosphoglycerate = (2R)-3-phosphoglycerate. It functions in the pathway carbohydrate degradation; glycolysis; pyruvate from D-glyceraldehyde 3-phosphate: step 3/5. Its function is as follows. Catalyzes the interconversion of 2-phosphoglycerate and 3-phosphoglycerate. The sequence is that of 2,3-bisphosphoglycerate-independent phosphoglycerate mutase from Acholeplasma laidlawii (strain PG-8A).